We begin with the raw amino-acid sequence, 24 residues long: Heat shock 70 kDa protein 4L (24 aa).

Residue Thr-19 is modified to Phosphothreonine.

This sequence belongs to the heat shock protein 70 family. As to quaternary structure, homodimer. In the testis, forms a complex with p53 at 32.5 degrees Celsius which is scrotal temperature but not at 37 or 42 degrees Celsius. In terms of tissue distribution, expressed at high levels in testis and at much lower levels in brain. In testis, expressed mainly in germ cells. Widespread in brain with highest expression in cerebellum and medulla oblongata. Also expressed in renal medulla of water-restricted animals.

Its subcellular location is the cytoplasm. The protein resides in the nucleus. Possesses chaperone activity in vitro where it inhibits aggregation of citrate synthase. The chain is Heat shock 70 kDa protein 4L (Hspa4l) from Rattus norvegicus (Rat).